The chain runs to 108 residues: Hydrogenase expression/formation protein HupN (108 aa).

A disordered region spans residues 88–108; it reads REPQLPPHLQAQLPPKEPNSP.

This sequence belongs to the HupF/HypC family.

In Azotobacter chroococcum mcd 1, this protein is Hydrogenase expression/formation protein HupN (hupN).